The following is a 1407-amino-acid chain: MLGLRTHGLDRYEHYIRRPSDFGKLELQDWLNHKSFRVSPNLLIDSSTTREWNEPELFYQNTEDETWVRPCVGPKLEPSMMMLRYHDSNIGQMPQFCYPISSPINFKPVLKYILQERSELSDGFPQKYNTLIGSLFDIDKNPETLDDSDIEALDDIEMSSDSGNVKEPKIELQALEEIQQKHFSLIVSNNGIFQTGSTSITYIQSGISGSIAIKPNNVAILILLTQPSGHLLSILPLDDGKETYLLQYWNLGQKGQWNIIKHQNEKQFVLIHKELGICKFFEFHLPFTFQLVNNLTLTDSVIMNGSFFPTNYTDLDPYFIIFITAIRYERIVYFVIEWNNNEIKKKEVYQLTVFDGEKTNMTIPIGLNACLVETPLKFSLVSANQIMSGETEFHSFQLKALKGIKSFFPAPLLLLKLQELHPHTFKKFQYCTIISSSTGNICFCVTERSTIVNGNLKFYELTRFKGLKSISPLPSNPINLDSRSSSYVLVVISFSRTLELTLSLEDLRCLDKKDVIKPLKNITFKHTIDSSTEENSQILAFTSSKFYNTHTGSNINDTRNSQVWLTSPNAITQPCIDYKLRKTHQLIHLKQFQIFRHLRIWKCKNLDIALLQRLGINQSNTESSLIFATDAVSNNRIFLLDLTMTTTIDNDDPVQGLINIEDLLCDTENETILLNFTKNNLIQVTRDTIYIDPIGGDKELRKISPGWEFENVTYNDGILIVWNAGLGCVSYIENIDAVDESGALVSNLSSSKGMSKFFKQLGTVTSVNFQIKESTDDPTKYDIWILLPDCVIRTPFSDWISDSLDFSDVYILSVQQALINGPYFCSLDYESYFEVHTLQNNCFKKGSRCTSRVNFQGKDIKFRSFGVNQCLAFSAFEIFVINLTPIHDSRELDFYKLKLPHLGNNNSILEVCPDIENNQLFILYSDGLRILELSYLTSNNGNFLLKSTRSKNKKFLYLDKINRMLVLNQDLREWECIRLSDGKAVGLDSQLLKDDSEEILEIKELPIATEDNPLEKKTVLLISFTSSLKLVLLTAAKNKISNQIIDSYKLDNSRLLNHLVITPRGEIFFLDYKVMGTDNEMSFNKLKVTKHCIDQEERNNTTLRLTLETRFTFKSWSTVKTFTVVGDNIIATTNMGEKLYLIKDFSSSSDESRRVYPLEMYPDSKVQKIIPLNECCFVVAAYCGNRNDLDSRLIFYSLPTIKVGLNNETGSLPDEYGNGRVDDIFEVDFPEGFQFGTMALYDVLHGERHVNRYSEGIRSENDEAEVALRQRRNLLLFWRNHSSTPKPSLRRAATIVYEDHVSSRYFEDISSILGSTAMRTKRLSPYNAVALDKPIQDISYDPAVQTLYVLMADQTIHKFGKDRLPCQDEYEPRWNSGYLVSRRSIVKSDLICEVGLWNLSDNCKNTV.

A required for interaction with MMS22 region spans residues 1–600 (MLGLRTHGLD…QFQIFRHLRI (600 aa)). Thr-1294 is modified (phosphothreonine).

Component of multiple cullin-RING ligases (CRLs) composed of 4 subunits: the RING protein HRT1, the cullin RTT101, a linker protein MMS1, and one of many alternative substrate receptors belonging to a protein family described as DCAF (DDB1- and CUL4-associated factor). Component of a RTT101(MMS1-MMS22) complex with the substrate receptor MMS22. This complex further interacts with RTT107 and CTF4 to form RTT101-MMS1-MMS22-RTT107 and RTT101-MMS1-MMS22-CTF4 complexes respectively. Component of a RTT101(MSS1-CRT10) complex with the substrate receptor CRT10. Component of a RTT101(MSS1-ESC2) complex with the potential substrate receptor ESC2. Component of a RTT101(MSS1-ORC5) complex with the potential substrate receptor ORC5. Interacts with RTT101 (via N-ter). Interacts (via N-ter) with MMS22 (via C-ter). Interacts with CRT10.

The protein localises to the nucleus. Its function is as follows. Component of multiple cullin-RING-based E3 ubiquitin-protein ligase complexes (CRLs), which mediate the ubiquitination of target proteins. The CRL associates with CDC34 as the E2 ubiquitin-conjugating enzyme. The functional specificity of the CRL depends on the type of the associated substrate receptor protein. RTT101(MMS1-MMS22) promotes fork progression through damaged DNA or natural pause sites by stabilizing replication proteins like the replication fork-pausing complex (FPC) and leading-strand polymerase at stalled replication forks. RTT101(MMS1-MMS22) ubiquitinates the acetylated histones H3K56ac-H4 at lysine residues H3K121, H3K122 and H3K125. Ubiquitination is required for efficient histone deposition during replication-coupled nucleosome assembly, probably by facilitating the transfer of H3-H4 from ASF1 to other chaperones involved in histone deposition. RTT101(MMS1-CRT10) may regulate nucleotide synthesis through transcriptional regulation of ribonucleotide reductase. RTT101(MMS1) is also involved in the non-functional rRNA decay (NRD) of 25S rRNA through the selective, ubiquitination-dependent degradation of nonfunctional ribosomal particles. Involved in the regulation of TY1 transposition. The sequence is that of E3 ubiquitin-protein ligase linker protein MMS1 (MMS1) from Saccharomyces cerevisiae (strain ATCC 204508 / S288c) (Baker's yeast).